The sequence spans 100 residues: Small ribosomal subunit protein uS14c (100 aa).

This sequence belongs to the universal ribosomal protein uS14 family. In terms of assembly, part of the 30S ribosomal subunit.

The protein resides in the plastid. The protein localises to the chloroplast. Binds 16S rRNA, required for the assembly of 30S particles. The chain is Small ribosomal subunit protein uS14c from Citrus sinensis (Sweet orange).